The following is a 791-amino-acid chain: Nuclear cap-binding protein subunit 1-A (791 aa).

Positions 1 to 24 (MSRRRHSDENDGGQAHKRRKTSEP) are disordered. Positions 28–240 (EDRLESLICR…CLWAQIQKLK (213 aa)) constitute an MIF4G domain. Positions 641 to 714 (LHSTIRKMNK…SEQKNLFLVI (74 aa)) form a coiled coil. A disordered region spans residues 664–687 (QRLAKQHKHRDSDDNDEDSGRKDG).

This sequence belongs to the NCBP1 family. In terms of assembly, component of the nuclear cap-binding complex (CBC), a heterodimer composed of ncbp1/cbp80 and ncbp2/cbp20 that interacts with m7GpppG-capped RNA. Component of an alternative nuclear cap-binding complex (CBC) composed of ncbp1/cbp80 and ncbp3.

It localises to the nucleus. Its subcellular location is the cytoplasm. In terms of biological role, component of the cap-binding complex (CBC), which binds cotranscriptionally to the 5'-cap of pre-mRNAs and is involved in various processes such as pre-mRNA splicing, translation regulation, nonsense-mediated mRNA decay, RNA-mediated gene silencing (RNAi) by microRNAs (miRNAs) and mRNA export. The CBC complex is involved in mRNA export from the nucleus, leading to the recruitment of the mRNA export machinery to the 5'-end of mRNA and to mRNA export in a 5' to 3' direction through the nuclear pore. The CBC complex is also involved in mediating U snRNA and intronless mRNAs export from the nucleus. The CBC complex is essential for a pioneer round of mRNA translation, before steady state translation when the CBC complex is replaced by cytoplasmic cap-binding protein eIF4E. The pioneer round of mRNA translation mediated by the CBC complex plays a central role in nonsense-mediated mRNA decay (NMD), NMD only taking place in mRNAs bound to the CBC complex, but not on eIF4E-bound mRNAs. The CBC complex enhances NMD in mRNAs containing at least one exon-junction complex (EJC), promoting the interaction between UPF1 and UPF2. The CBC complex is also involved in 'failsafe' NMD, which is independent of the EJC complex, while it does not participate in Staufen-mediated mRNA decay (SMD). During cell proliferation, the CBC complex is also involved in microRNAs (miRNAs) biogenesis via its interaction with SRRT/ARS2 and is required for miRNA-mediated RNA interference. The CBC complex also acts as a negative regulator of parn, thereby acting as an inhibitor of mRNA deadenylation. In the CBC complex, NCBP1/CBP80 does not bind directly capped RNAs (m7GpppG-capped RNA) but is required to stabilize the movement of the N-terminal loop of NCBP2/CBP20 and lock the CBC into a high affinity cap-binding state with the cap structure. Associates with NCBP3 to form an alternative cap-binding complex (CBC) which plays a key role in mRNA export. The conventional CBC with NCBP2 binds both small nuclear RNA (snRNA) and messenger (mRNA) and is involved in their export from the nucleus whereas the alternative CBC with NCBP3 does not bind snRNA and associates only with mRNA thereby playing a role only in mRNA export. The chain is Nuclear cap-binding protein subunit 1-A (ncbp1-a) from Xenopus laevis (African clawed frog).